The following is a 241-amino-acid chain: Ribonuclease PH (241 aa).

Phosphate is bound by residues R87 and G125–R127.

It belongs to the RNase PH family. As to quaternary structure, homohexameric ring arranged as a trimer of dimers.

The catalysed reaction is tRNA(n+1) + phosphate = tRNA(n) + a ribonucleoside 5'-diphosphate. Phosphorolytic 3'-5' exoribonuclease that plays an important role in tRNA 3'-end maturation. Removes nucleotide residues following the 3'-CCA terminus of tRNAs; can also add nucleotides to the ends of RNA molecules by using nucleoside diphosphates as substrates, but this may not be physiologically important. Probably plays a role in initiation of 16S rRNA degradation (leading to ribosome degradation) during starvation. In Dehalococcoides mccartyi (strain ATCC BAA-2100 / JCM 16839 / KCTC 5957 / BAV1), this protein is Ribonuclease PH.